Reading from the N-terminus, the 365-residue chain is Prostaglandin E2 receptor EP3 subtype (365 aa).

At 1–30 the chain is on the extracellular side; sequence MAGVWAPEHSVEAHSNQSSAADGCGSVSVA. Residue Asn16 is glycosylated (N-linked (GlcNAc...) asparagine). The helical transmembrane segment at 31–55 threads the bilayer; it reads FPITMMVTGFVGNALAMLLVVRSYR. Topologically, residues 56–68 are cytoplasmic; the sequence is RRESKRKKSFLLC. The chain crosses the membrane as a helical span at residues 69–89; that stretch reads IGWLALTDLVGQLLTSPVVIL. The Extracellular portion of the chain corresponds to 90 to 108; the sequence is VYLSQRRWEQLDPSGRLCT. Cysteines 107 and 184 form a disulfide. Residues 109–130 traverse the membrane as a helical segment; it reads FFGLTMTVFGLSSLLVASAMAV. At 131-151 the chain is on the cytoplasmic side; it reads ERALAIRAPHWYASHMKTRAT. A helical membrane pass occupies residues 152–173; sequence PVLLGVWLSVLAFALLPVLGVG. The Extracellular portion of the chain corresponds to 174–203; that stretch reads RYSVQWPGTWCFISTGPAGNETDSAREPGS. The N-linked (GlcNAc...) asparagine glycan is linked to Asn193. Residues 204 to 229 form a helical membrane-spanning segment; that stretch reads VAFASAFACLGLLALVVTFACNLATI. Residues 230–259 are Cytoplasmic-facing; the sequence is KALVSRCRAKAAASQSSAQWGRITTETAIQ. A helical membrane pass occupies residues 260 to 283; the sequence is LMGIMCVLSVCWSPLLIMMLKMIF. The Extracellular segment spans residues 284 to 303; it reads NQMSVEQCKTQMGKEKECNS. Residues 304-325 traverse the membrane as a helical segment; the sequence is FLIAVRLASLNQILDPWVYLLL. Residues 326–365 lie on the Cytoplasmic side of the membrane; the sequence is RKILLRKFCQIRDHTNYASSSTSLPCPGSSVLMWSDQLER.

Belongs to the G-protein coupled receptor 1 family. In terms of assembly, interacts (via C-terminus) with MKLN1. Does not interact with MKLN1. Principally expressed in the tubules of the renal medulla. Specific expression is seen in medullary and cortical thick ascending limbs; lower levels are detected in cortical and inner medullary collecting ducts. Not detected significantly in the glomeruli. In the brain, expressed in all types of glial cells.

The protein localises to the cell membrane. Receptor for prostaglandin E2 (PGE2). Required for normal development of fever in response to pyrinogens, including IL1B, prostaglandin E2 and bacterial lipopolysaccharide (LPS). Required for normal potentiation of platelet aggregation by prostaglandin E2, and thus plays a role in the regulation of blood coagulation. Required for increased HCO3(-) secretion in the duodenum in response to mucosal acidification, and thereby contributes to the protection of the mucosa against acid-induced ulceration. Not required for normal kidney function, normal urine volume and osmolality. In terms of biological role, receptor for prostaglandin E2 (PGE2); ligand binding activates a signaling cascade via G(i) proteins that leads to the inhibition of adenylate cyclase. Functionally, receptor for prostaglandin E2 (PGE2); ligand binding can activate several distinct signaling cascades, resulting in activation or inhibition of adenylate cyclase. The sequence is that of Prostaglandin E2 receptor EP3 subtype (Ptger3) from Rattus norvegicus (Rat).